Here is a 291-residue protein sequence, read N- to C-terminus: 4-hydroxy-tetrahydrodipicolinate synthase (291 aa).

T44 is a binding site for pyruvate. Catalysis depends on Y132, which acts as the Proton donor/acceptor. K160 acts as the Schiff-base intermediate with substrate in catalysis. I202 provides a ligand contact to pyruvate.

This sequence belongs to the DapA family. As to quaternary structure, homotetramer; dimer of dimers.

It is found in the cytoplasm. The enzyme catalyses L-aspartate 4-semialdehyde + pyruvate = (2S,4S)-4-hydroxy-2,3,4,5-tetrahydrodipicolinate + H2O + H(+). It functions in the pathway amino-acid biosynthesis; L-lysine biosynthesis via DAP pathway; (S)-tetrahydrodipicolinate from L-aspartate: step 3/4. Catalyzes the condensation of (S)-aspartate-beta-semialdehyde [(S)-ASA] and pyruvate to 4-hydroxy-tetrahydrodipicolinate (HTPA). In Syntrophus aciditrophicus (strain SB), this protein is 4-hydroxy-tetrahydrodipicolinate synthase.